A 757-amino-acid polypeptide reads, in one-letter code: Activating signal cointegrator 1 complex subunit 2 (757 aa).

The residue at position 233 (Thr233) is a Phosphothreonine. Ser447 is modified (phosphoserine). A CUE domain is found at 467 to 510; it reads ELDSLISQVKDLLPDLGEGFILACLEYYHYDPEQVINNILEERL. Disordered stretches follow at residues 617-687 and 699-757; these read DDTY…VLRE and KKGY…MIPS. Position 632 is a phosphoserine (Ser632). The segment covering 657–670 has biased composition (acidic residues); it reads QEEDDDDEEDDADE. Positions 671-687 are enriched in basic and acidic residues; it reads EAPKPDHFVQDPAVLRE. Ser713 is modified (phosphoserine). Basic and acidic residues predominate over residues 719–734; sequence QSRETTQERRKKEANK.

It belongs to the ASCC2 family. Identified in the ASCC complex that contains ASCC1, ASCC2 and ASCC3. Interacts directly with ASCC3. The ASCC complex interacts with ALKBH3. Interacts (via CUE domain) with 'Lys-63'-linked polyubiquitin chains, but not with 'Lys-48'-linked polyubiquitin chains. Part of the ASC-1 complex, that contains TRIP4, ASCC1, ASCC2 and ASCC3. Component of the RQT (ribosome quality control trigger) complex, that contains ASCC2, ASCC3 and TRIP4. Interacts with CSRP1. Interacts with PRPF8, a component of the spliceosome. Interacts with ZCCHC4. In terms of tissue distribution, ubiquitous.

It localises to the nucleus. The protein localises to the nucleus speckle. In terms of biological role, ubiquitin-binding protein involved in DNA repair and rescue of stalled ribosomes. Plays a role in DNA damage repair as component of the ASCC complex. Recruits ASCC3 and ALKBH3 to sites of DNA damage by binding to polyubiquitinated proteins that have 'Lys-63'-linked polyubiquitin chains. Part of the ASC-1 complex that enhances NF-kappa-B, SRF and AP1 transactivation. Involved in activation of the ribosome quality control (RQC) pathway, a pathway that degrades nascent peptide chains during problematic translation. Specifically recognizes and binds RPS20/uS10 ubiquitinated by ZNF598, promoting recruitment of the RQT (ribosome quality control trigger) complex on stalled ribosomes, followed by disassembly of stalled ribosomes. The protein is Activating signal cointegrator 1 complex subunit 2 (ASCC2) of Homo sapiens (Human).